The sequence spans 635 residues: Threonine--tRNA ligase (635 aa).

The TGS domain maps to 1-61 (MIKITLKDGK…HKDSSLEILT (61 aa)). A catalytic region spans residues 242–532 (DHRKLGKELD…LIEQYAGAFP (291 aa)). Zn(2+) is bound by residues C333, H384, and H509.

It belongs to the class-II aminoacyl-tRNA synthetase family. Homodimer. Requires Zn(2+) as cofactor.

Its subcellular location is the cytoplasm. It carries out the reaction tRNA(Thr) + L-threonine + ATP = L-threonyl-tRNA(Thr) + AMP + diphosphate + H(+). Catalyzes the attachment of threonine to tRNA(Thr) in a two-step reaction: L-threonine is first activated by ATP to form Thr-AMP and then transferred to the acceptor end of tRNA(Thr). Also edits incorrectly charged L-seryl-tRNA(Thr). The protein is Threonine--tRNA ligase of Clostridium botulinum (strain ATCC 19397 / Type A).